Reading from the N-terminus, the 378-residue chain is Wnt inhibitory factor 1 (378 aa).

A signal peptide spans 1–28; the sequence is MAFRTPAVQLHLKACVLLLLGGLLEAAY. One can recognise a WIF domain in the interval 36–175; that stretch reads MWIDANQARI…PHNAIFFKTC (140 aa). N86 is a glycosylation site (N-linked (GlcNAc...) asparagine). Intrachain disulfides connect C138–C175, C180–C190, C184–C196, C212–C222, C216–C228, and C230–C239. EGF-like domains are found at residues 176 to 205, 208 to 240, 243 to 272, 272 to 304, and 305 to 336; these read QRAK…FYGV, EKAL…SSCE, NCST…VRCE, ELSK…DLCS, and KAVC…RHCN. N243 is a glycosylation site (N-linked (GlcNAc...) asparagine). 9 disulfide bridges follow: C244/C254, C248/C260, C262/C271, C276/C286, C280/C292, C294/C303, C308/C318, C312/C324, and C326/C335. The tract at residues 343-378 is disordered; sequence VSNSQRVSPSKHKSPSVAAAKEAPETSQPSETNYVV. Polar residues predominate over residues 367-378; that stretch reads ETSQPSETNYVV.

In terms of tissue distribution, highly expressed in unsegmented paraxial mesoderm.

Its subcellular location is the secreted. Functionally, binds to WNT proteins and inhibits their activities. May be involved in mesoderm segmentation. This is Wnt inhibitory factor 1 (wif1) from Danio rerio (Zebrafish).